A 139-amino-acid chain; its full sequence is UPF0251 protein Csac_0224 (139 aa).

Belongs to the UPF0251 family.

This Caldicellulosiruptor saccharolyticus (strain ATCC 43494 / DSM 8903 / Tp8T 6331) protein is UPF0251 protein Csac_0224.